We begin with the raw amino-acid sequence, 369 residues long: Tyrosyl-DNA phosphodiesterase 2 (369 aa).

The tract at residues 58–77 (EKTEVTGNKRKDDTAEASGT) is disordered. Residues 59 to 71 (KTEVTGNKRKDDT) show a composition bias toward basic and acidic residues. The segment at 129–133 (NVDGL) is interaction with 5' end of substrate DNA. Residues aspartate 131 and glutamate 161 each coordinate Mg(2+). The interval 235-240 (HLESCK) is interaction with 5' end of substrate DNA. Aspartate 271 functions as the Proton donor/acceptor in the catalytic mechanism. The segment at 273 to 275 (NLR) is interaction with 5' end of substrate DNA.

It belongs to the CCR4/nocturin family. TTRAP/TDP2 subfamily. Requires Mg(2+) as cofactor. The cofactor is Mn(2+). As to expression, expressed ubiquitously during blastula stages and throughout gastrulation. Shortly after shield formation, expressed weakly in dorsal forerunner cells (DFCs). Between somite stages 5 and 9, expressed in the tailbud and around the Kupffer's vesicle at a higher level than the more uniform expression in the embryo.

The protein localises to the nucleus. Its subcellular location is the PML body. Its function is as follows. DNA repair enzyme that can remove a variety of covalent adducts from DNA through hydrolysis of a 5'-phosphodiester bond, giving rise to DNA with a free 5' phosphate. Catalyzes the hydrolysis of dead-end complexes between DNA and the topoisomerase 2 (top2) active site tyrosine residue. Hydrolyzes 5'-phosphoglycolates on protruding 5' ends on DNA double-strand breaks (DSBs) due to DNA damage by radiation and free radicals. Controls gastrulation movements and left/right (L/R) axis determination via smad3-mediated regulation of cdh1/e-cadherin. Regulates the formation of Kupffer's vesicle, a signaling center essential for establishing L/R asymmetry. Modulates smad3 activity through modulating nodal-acvr1/akt4 signaling. This Danio rerio (Zebrafish) protein is Tyrosyl-DNA phosphodiesterase 2 (tdp2).